We begin with the raw amino-acid sequence, 95 residues long: Cytochrome b-c1 complex subunit 8, mitochondrial (95 aa).

A helical transmembrane segment spans residues 57 to 74 (FLYVAIPFVVVWSIWTRA).

Belongs to the UQCRQ/QCR8 family. As to quaternary structure, component of the ubiquinol-cytochrome c oxidoreductase (cytochrome b-c1 complex, complex III, CIII), a multisubunit enzyme composed of 10 subunits. The complex is composed of 3 respiratory subunits cytochrome b (COB), cytochrome c1 (CYT1) and Rieske protein (RIP1), 2 core protein subunits COR1 and QCR2, and 5 low-molecular weight protein subunits QCR6, QCR7, QCR8, QCR9 and QCR10. The complex exists as an obligatory dimer and forms supercomplexes (SCs) in the inner mitochondrial membrane with a monomer or a dimer of cytochrome c oxidase (complex IV, CIV), resulting in 2 different assemblies (supercomplexes III(2)IV and III(2)IV(2)).

The protein localises to the membrane. It is found in the mitochondrion inner membrane. Its function is as follows. Component of the ubiquinol-cytochrome c oxidoreductase, a multisubunit transmembrane complex that is part of the mitochondrial electron transport chain which drives oxidative phosphorylation. The complex plays an important role in the uptake of multiple carbon sources present in different host niches. This chain is Cytochrome b-c1 complex subunit 8, mitochondrial, found in Candida albicans (strain SC5314 / ATCC MYA-2876) (Yeast).